The following is a 258-amino-acid chain: Aspartate/glutamate leucyltransferase (258 aa).

The protein belongs to the R-transferase family. Bpt subfamily.

The protein resides in the cytoplasm. It carries out the reaction N-terminal L-glutamyl-[protein] + L-leucyl-tRNA(Leu) = N-terminal L-leucyl-L-glutamyl-[protein] + tRNA(Leu) + H(+). The enzyme catalyses N-terminal L-aspartyl-[protein] + L-leucyl-tRNA(Leu) = N-terminal L-leucyl-L-aspartyl-[protein] + tRNA(Leu) + H(+). Its function is as follows. Functions in the N-end rule pathway of protein degradation where it conjugates Leu from its aminoacyl-tRNA to the N-termini of proteins containing an N-terminal aspartate or glutamate. The protein is Aspartate/glutamate leucyltransferase of Rhizobium johnstonii (strain DSM 114642 / LMG 32736 / 3841) (Rhizobium leguminosarum bv. viciae).